Consider the following 470-residue polypeptide: Siroheme synthase (470 aa).

Residues 1-203 (MEFFPIFLKL…GDEAAARAEM (203 aa)) form a precorrin-2 dehydrogenase /sirohydrochlorin ferrochelatase region. Residues 22 to 23 (EV) and 43 to 44 (PE) each bind NAD(+). At serine 128 the chain carries Phosphoserine. The interval 216-470 (GAVYLVGAGP…ENSAVTIQED (255 aa)) is uroporphyrinogen-III C-methyltransferase. Proline 225 contributes to the S-adenosyl-L-methionine binding site. The Proton acceptor role is filled by aspartate 248. Lysine 270 serves as the catalytic Proton donor. Residues 301–303 (GGD), methionine 383, and alanine 412 contribute to the S-adenosyl-L-methionine site.

It in the N-terminal section; belongs to the precorrin-2 dehydrogenase / sirohydrochlorin ferrochelatase family. This sequence in the C-terminal section; belongs to the precorrin methyltransferase family.

It carries out the reaction uroporphyrinogen III + 2 S-adenosyl-L-methionine = precorrin-2 + 2 S-adenosyl-L-homocysteine + H(+). The catalysed reaction is precorrin-2 + NAD(+) = sirohydrochlorin + NADH + 2 H(+). It catalyses the reaction siroheme + 2 H(+) = sirohydrochlorin + Fe(2+). The protein operates within cofactor biosynthesis; adenosylcobalamin biosynthesis; precorrin-2 from uroporphyrinogen III: step 1/1. It functions in the pathway cofactor biosynthesis; adenosylcobalamin biosynthesis; sirohydrochlorin from precorrin-2: step 1/1. Its pathway is porphyrin-containing compound metabolism; siroheme biosynthesis; precorrin-2 from uroporphyrinogen III: step 1/1. It participates in porphyrin-containing compound metabolism; siroheme biosynthesis; siroheme from sirohydrochlorin: step 1/1. The protein operates within porphyrin-containing compound metabolism; siroheme biosynthesis; sirohydrochlorin from precorrin-2: step 1/1. Multifunctional enzyme that catalyzes the SAM-dependent methylations of uroporphyrinogen III at position C-2 and C-7 to form precorrin-2 via precorrin-1. Then it catalyzes the NAD-dependent ring dehydrogenation of precorrin-2 to yield sirohydrochlorin. Finally, it catalyzes the ferrochelation of sirohydrochlorin to yield siroheme. This Chromobacterium violaceum (strain ATCC 12472 / DSM 30191 / JCM 1249 / CCUG 213 / NBRC 12614 / NCIMB 9131 / NCTC 9757 / MK) protein is Siroheme synthase.